The sequence spans 277 residues: MILAKARIQGHTARKRFGQHFLIDSAVIDAIVSAIAPAPQDCLVEIGPGLGALTWPLLERLGGAGRLHAIEMDRDLAAHLQRLGHASLILHAGDALRFDFAQLARAEQARLRIVGNLPYNISSPLLFHLLDEMNEVVDQHFMLQREVAARIAAAPGSAHYGRLSVMLQSRYAVERLFDVPPCAFAPPPAVHSAVLRMAPHASRALPQLDWARFAALVRAAFSQRRKILRHTLSVYQKTPDFDALGFDHGRRAQEVPVGEYLKLAQHIEQNAHPNPKP.

S-adenosyl-L-methionine is bound by residues histidine 20, leucine 22, glycine 47, glutamate 71, aspartate 94, and asparagine 116.

Belongs to the class I-like SAM-binding methyltransferase superfamily. rRNA adenine N(6)-methyltransferase family. RsmA subfamily.

It is found in the cytoplasm. The catalysed reaction is adenosine(1518)/adenosine(1519) in 16S rRNA + 4 S-adenosyl-L-methionine = N(6)-dimethyladenosine(1518)/N(6)-dimethyladenosine(1519) in 16S rRNA + 4 S-adenosyl-L-homocysteine + 4 H(+). Specifically dimethylates two adjacent adenosines (A1518 and A1519) in the loop of a conserved hairpin near the 3'-end of 16S rRNA in the 30S particle. May play a critical role in biogenesis of 30S subunits. The sequence is that of Ribosomal RNA small subunit methyltransferase A from Burkholderia sp.